Consider the following 726-residue polypeptide: Cyclic nucleotide-gated ion channel 2 (726 aa).

At Met-1 to Ala-127 the chain is on the cytoplasmic side. Positions Ile-26–Glu-46 are disordered. Positions Gly-36–Asp-45 are enriched in low complexity. Residues Leu-128–Ile-148 form a helical membrane-spanning segment. Residues Gly-149–Ala-162 lie on the Extracellular side of the membrane. Residues Phe-163 to Trp-183 traverse the membrane as a helical segment. The Cytoplasmic segment spans residues Leu-184 to Thr-219. A helical transmembrane segment spans residues Gly-220–Val-240. Topologically, residues Pro-241 to Thr-254 are extracellular. The chain crosses the membrane as a helical span at residues Ile-255–Met-275. The Cytoplasmic portion of the chain corresponds to Arg-276–Thr-282. A helical transmembrane segment spans residues Gly-283–Ala-303. Topologically, residues Ser-304–Trp-424 are extracellular. The helical transmembrane segment at Leu-425–Ile-445 threads the bilayer. The Cytoplasmic portion of the chain corresponds to Gly-446–Glu-726. Residues Leu-531–Tyr-661 and Asp-600 contribute to the a nucleoside 3',5'-cyclic phosphate site. Positions Phe-645–Tyr-661 are calmodulin-binding. The region spanning Arg-666–Pro-695 is the IQ domain.

It belongs to the cyclic nucleotide-gated cation channel (TC 1.A.1.5) family. Homotetramer or heterotetramer (Potential). Binds calmodulin-1/4 with a higher affinity than calmodulin-2/3/5. As to expression, expressed in the whole plant but only weakly in roots. Strongly expressed in the expanded cotyledons of 14-day-old seedlings and detected later in leaves after the transition to flowering. Also detected in flowers during organ senescence and in the dehiscence zone of siliques.

The protein localises to the cell membrane. In terms of biological role, acts as a cyclic nucleotide-gated ion channel. Permeable to potassium and calcium in a cyclic nucleotide-dependent fashion (cAMP or cGMP). Could also transport lithium, cesium and rubium and displays a strong selectivity against sodium. Seems to directly participate in pathogen-induced calcium influx. May function in homeostasis, re-establishing ionic balance after defense action and/or other stimuli. Could mediate the initiation of the developmentally regulated cell death programs. The sequence is that of Cyclic nucleotide-gated ion channel 2 (CNGC2) from Arabidopsis thaliana (Mouse-ear cress).